The sequence spans 267 residues: Interleukin-15 receptor subunit alpha (267 aa).

A signal peptide spans 1–30 (MAPRRARGCRTLGLPALLLLLLLRPPATRG). A Sushi domain is found at 31-95 (ITCPPPMSVE…WTTPSLKCIR (65 aa)). Residues 31-205 (ITCPPPMSVE…VYPQGHSDTT (175 aa)) lie on the Extracellular side of the membrane. Disulfide bonds link cysteine 33-cysteine 75 and cysteine 59-cysteine 93. Residues 102 to 178 (QRPAPPSTVT…ESSHGTPSQT (77 aa)) are disordered. Residues 108-124 (STVTTAGVTPQPESLSP) are compositionally biased toward polar residues. Residues 129–145 (PAASSPSSNNTAATTAA) show a composition bias toward low complexity. Asparagine 137 is a glycosylation site (N-linked (GlcNAc...) asparagine). Over residues 152-165 (LMPSKSPSTGTTEI) the composition is skewed to polar residues. A helical transmembrane segment spans residues 206 to 228 (VAISTSTVLLCGLSAVSLLACYL). At 229–267 (KSRQTPPLASVEMEAMEALPVTWGTSSRDEDLENCSHHL) the chain is on the cytoplasmic side.

As to quaternary structure, the interleukin-15 receptor IL15R is a heterotrimer of IL15RA, IL2RB and IL2RG. IL15RA also self-associates. Interacts with SYK. N-glycosylated and O-glycosylated. In terms of processing, a soluble form (sIL-15RA) arises from proteolytic shedding of the membrane-anchored receptor. It also binds IL-15 and thus interferes with IL-15 binding to the membrane receptor. Expressed in neutrophils (at protein level). Expressed in fetal brain with higher expression in the hippocampus and cerebellum than in cortex and thalamus. Higher levels of soluble sIL-15RA form in comparison with membrane-bound forms is present in all brain structures. Isoforms 1, 3, 4, 5, 6, 7, 8 and 9: Widely expressed.

It localises to the membrane. Its subcellular location is the nucleus membrane. The protein localises to the cell surface. The protein resides in the endoplasmic reticulum membrane. It is found in the golgi apparatus membrane. It localises to the cytoplasmic vesicle membrane. Its subcellular location is the secreted. The protein localises to the extracellular space. In terms of biological role, high-affinity receptor for interleukin-15. Can signal both in cis and trans where IL15R from one subset of cells presents IL15 to neighboring IL2RG-expressing cells. In neutrophils, binds and activates kinase SYK in response to IL15 stimulation. In neutrophils, required for IL15-induced phagocytosis in a SYK-dependent manner. Expression of different isoforms may alter or interfere with signal transduction. Its function is as follows. Does not bind IL15. The chain is Interleukin-15 receptor subunit alpha (IL15RA) from Homo sapiens (Human).